A 198-amino-acid chain; its full sequence is 3-isopropylmalate dehydratase small subunit (198 aa).

The protein belongs to the LeuD family. LeuD type 1 subfamily. In terms of assembly, heterodimer of LeuC and LeuD.

The enzyme catalyses (2R,3S)-3-isopropylmalate = (2S)-2-isopropylmalate. It functions in the pathway amino-acid biosynthesis; L-leucine biosynthesis; L-leucine from 3-methyl-2-oxobutanoate: step 2/4. In terms of biological role, catalyzes the isomerization between 2-isopropylmalate and 3-isopropylmalate, via the formation of 2-isopropylmaleate. This Mycolicibacterium paratuberculosis (strain ATCC BAA-968 / K-10) (Mycobacterium paratuberculosis) protein is 3-isopropylmalate dehydratase small subunit.